We begin with the raw amino-acid sequence, 3970 residues long: Polyketide synthase-nonribosomal peptide synthetase hybrid himA (3970 aa).

The region spanning 8-443 is the Ketosynthase family 3 (KS3) domain; the sequence is SEPIAIIGSA…GTNSHAILES (436 aa). Active-site for beta-ketoacyl synthase activity residues include Cys-181, His-320, and His-363. Positions 561–876 are malonyl-CoA:ACP transacylase (MAT) domain; sequence IFTGQGAQWP…PYAGLLHRGR (316 aa). Positions 949 to 1083 are N-terminal hotdog fold; it reads HELLGVRTSD…GMVHLHLGEP (135 aa). The segment at 949–1253 is dehydratase (DH) domain; sequence HELLGVRTSD…GLTVVALSST (305 aa). Positions 949–1256 constitute a PKS/mFAS DH domain; sequence HELLGVRTSD…VVALSSTGPA (308 aa). The active-site Proton acceptor; for dehydratase activity is His-981. A C-terminal hotdog fold region spans residues 1098–1256; that stretch reads GLNRVDLDEF…VVALSSTGPA (159 aa). The active-site Proton donor; for dehydratase activity is Asp-1158. The ketoreductase (KR) domain stretch occupies residues 2060-2234; that stretch reads TYVMIGLTGE…ASVLDIGMVS (175 aa). The Carrier 1 domain maps to 2342–2419; that stretch reads AIAAILTESF…TLAEEVAKEL (78 aa). Ser-2379 bears the O-(pantetheine 4'-phosphoryl)serine mark. The interval 2420 to 2482 is disordered; sequence FEDRSTSAPP…NDDSDPTAQC (63 aa). Residues 2445–2466 are compositionally biased toward low complexity; that stretch reads GSSTDPSSNSDSKSGFDGFSSD. The segment covering 2467–2477 has biased composition (acidic residues); it reads DSSDIANDDSD. The condensation (C) domain stretch occupies residues 2487–2919; it reads PMSLSQARMW…ATTPTERVAT (433 aa). Residues 2974 to 3381 are adenylation (A) domain; the sequence is SYKAMSDRVN…LGDIANAILK (408 aa). The segment at 3466–3495 is disordered; sequence RPLPASGDEDGDEDTETETGADADADAGAD. Acidic residues predominate over residues 3472-3492; sequence GDEDGDEDTETETGADADADA. In terms of domain architecture, Carrier 2 spans 3496 to 3574; the sequence is TTLSDIHSKL…AIAERILRGV (79 aa). O-(pantetheine 4'-phosphoryl)serine is present on Ser-3534. The interval 3633–3866 is reductase (R) domain; that stretch reads LTGATGFLGR…FIRVETVAEE (234 aa).

It in the C-terminal section; belongs to the NRP synthetase family.

Its pathway is secondary metabolite biosynthesis. Functionally, polyketide synthase-nonribosomal peptide synthetase hybrid; part of the him gene cluster that mediates the biosynthesis of himeic acid A, a ubiquitin-activating enzyme (E1) inhibitor. First, himA, together with the trans-enoyl reductase himH, catalyzes the formation of apolyketide chain, which is then condensed with leucine by the NRPS activity of himA. Dieckmann cyclization and release from himA gives a tetramic acid intermediate as the product of himA PKS-NRPS. HimG then catalyzes alpha-oxidation of the tetramic acid ring, with a subsequent rearrangement to yield apyrone intermediate. Two terminal methyl groups of polyketide and amide side chains are oxidized to carboxylic acids by himC cytochrome P450 monooxygenase to form himeic acid A. Himeic acid A is further converted to himeic acids B and C during culture growth. No gene responsible for pyrone to pyridone conversion was found in the him gene cluster and himeic acid A is non-enzymatically converted to himeic acid C by the incorporation of an ammonium nitrogen atom in a pH5 buffer, and to himeic acid B at a conversion ratio of 50% during incubation in MeOH for 5 days. This is Polyketide synthase-nonribosomal peptide synthetase hybrid himA from Aspergillus japonicus.